We begin with the raw amino-acid sequence, 368 residues long: DNA replication and repair protein RecF (368 aa).

30-37 (GNNAQGKT) is a binding site for ATP.

The protein belongs to the RecF family.

It localises to the cytoplasm. In terms of biological role, the RecF protein is involved in DNA metabolism; it is required for DNA replication and normal SOS inducibility. RecF binds preferentially to single-stranded, linear DNA. It also seems to bind ATP. The sequence is that of DNA replication and repair protein RecF from Streptococcus pyogenes serotype M12 (strain MGAS9429).